The primary structure comprises 220 residues: MRLILLGAPGAGKGTQANFIKEKFGIPQISTGDMLRAAVKAGTPLGVEAKGYMDAGKLVPDALIIGLVKERLKESDCANGYLFDGFPRTIAQADAMKEAGVAIDYVLEIDVPFSEIIERMSGRRTHPASGRTYHVKFNPPKVEGHDDVTGEPLIQRDDDKEETVKKRLEVYEAQTKPLITYYGDWAQRGEENGLKAPQYRKISGLGSVEEIRERAFGALK.

10-15 (GAGKGT) lines the ATP pocket. The interval 30–59 (STGDMLRAAVKAGTPLGVEAKGYMDAGKLV) is NMP. Residues threonine 31, arginine 36, 57 to 59 (KLV), 85 to 88 (GFPR), and glutamine 92 contribute to the AMP site. The LID stretch occupies residues 122-159 (GRRTHPASGRTYHVKFNPPKVEGHDDVTGEPLIQRDDD). ATP-binding positions include arginine 123 and 132-133 (TY). AMP-binding residues include arginine 156 and arginine 167. Glycine 206 serves as a coordination point for ATP.

It belongs to the adenylate kinase family. Monomer.

The protein localises to the cytoplasm. The catalysed reaction is AMP + ATP = 2 ADP. It participates in purine metabolism; AMP biosynthesis via salvage pathway; AMP from ADP: step 1/1. Catalyzes the reversible transfer of the terminal phosphate group between ATP and AMP. Plays an important role in cellular energy homeostasis and in adenine nucleotide metabolism. This is Adenylate kinase from Burkholderia lata (strain ATCC 17760 / DSM 23089 / LMG 22485 / NCIMB 9086 / R18194 / 383).